Reading from the N-terminus, the 60-residue chain is Beta-defensin 8 (60 aa).

Residues 1–22 (MRIHYLLFTFLLVLLSPLAAFS) form the signal peptide. A propeptide spanning residues 23-25 (QKI) is cleaved from the precursor. Intrachain disulfides connect cysteine 31–cysteine 58, cysteine 38–cysteine 52, and cysteine 42–cysteine 59.

It belongs to the beta-defensin family. Most highly expressed in testis and heart.

The protein resides in the secreted. In terms of biological role, a synthetic peptide displays antimicrobial activities against S.aureus, P.aeruginosa, E.coli and B.cepacia. The antimicrobial activity against S.aureus, E.coli and B.cepacia is reduced in raised concentration of NaCl, but its action against P.aeruginosa is independent of NaCl concentration. The sequence is that of Beta-defensin 8 (Defb8) from Mus musculus (Mouse).